Here is a 2604-residue protein sequence, read N- to C-terminus: Probable polyketide synthase 17 (2604 aa).

In terms of domain architecture, Ketosynthase family 3 (KS3) spans 11-433 (NDDIAIIGMG…GSNCHMILSE (423 aa)). Catalysis depends on for beta-ketoacyl synthase activity residues cysteine 179, histidine 316, and histidine 356. Residues 631 to 664 (GISPSIVVGHSFGEIPSALFSDVISLETAVKIVY) are acyl/malonyl transferases. Serine 641 serves as the catalytic For acyl/malonyl transferase activity. The segment at 937-1057 (NNLLGHDQFA…GRIGLFKHNP (121 aa)) is N-terminal hotdog fold. A PKS/mFAS DH domain is found at 937–1216 (NNLLGHDQFA…CTSLIRLKKQ (280 aa)). Histidine 968 serves as the catalytic Proton acceptor; for dehydratase activity. Residues 1072-1216 (SFTTLTKSEV…CTSLIRLKKQ (145 aa)) are C-terminal hotdog fold. The active-site Proton donor; for dehydratase activity is the aspartate 1132. Residues 1357–1407 (GESEHFSPSNPSSPNDTPRNNSNNCSSKNNAASSDDADDDTNNEETINQLN) are disordered. The span at 1363 to 1390 (SPSNPSSPNDTPRNNSNNCSSKNNAASS) shows a compositional bias: low complexity. Positions 2507–2584 (GDSGSTQAKV…SIIQRISSKS (78 aa)) constitute a Carrier domain. Serine 2544 is subject to O-(pantetheine 4'-phosphoryl)serine. Low complexity predominate over residues 2581-2597 (SSKSTSTSTPNPTNTSK). The tract at residues 2581-2604 (SSKSTSTSTPNPTNTSKQTATKKT) is disordered.

It depends on pantetheine 4'-phosphate as a cofactor.

In terms of biological role, probable polyketide synthase. The protein is Probable polyketide synthase 17 (pks17) of Dictyostelium discoideum (Social amoeba).